Consider the following 436-residue polypeptide: GTPase Der (436 aa).

EngA-type G domains are found at residues 4-167 (PTVA…PVEE) and 175-351 (IRFS…ESQN). GTP-binding positions include 10–17 (GRPNVGKS), 57–61 (DTGGI), 119–122 (NKVD), 181–188 (GRPNVGKS), 229–233 (DTAGM), and 294–297 (NKWD). The KH-like domain occupies 352–436 (KRIPSAVLND…PIHLIARKRK (85 aa)).

The protein belongs to the TRAFAC class TrmE-Era-EngA-EngB-Septin-like GTPase superfamily. EngA (Der) GTPase family. As to quaternary structure, associates with the 50S ribosomal subunit.

GTPase that plays an essential role in the late steps of ribosome biogenesis. The protein is GTPase Der of Streptococcus uberis (strain ATCC BAA-854 / 0140J).